A 653-amino-acid chain; its full sequence is Transcription factor Ken 1 (653 aa).

Positions 35–103 (TDLLLICDGK…LYSGQVYVRS (69 aa)) constitute a BTB domain. Disordered regions lie at residues 126–215 (NSDG…DRDR), 234–305 (NNHP…SDDA), 429–451 (LSNN…PPSA), and 512–534 (ELSA…GSGS). Residues 145–157 (NRNTEGITGSSVV) are compositionally biased toward polar residues. Over residues 251–272 (GHHHHHHHHHHHRQLHQIKTRS) the composition is skewed to basic residues. The span at 286–299 (SDPVNLSIVKQQQD) shows a compositional bias: polar residues. A compositionally biased stretch (low complexity) spans 430-444 (SNNNNSSSNNNNNNN). A compositionally biased stretch (gly residues) spans 520–534 (AGGGGGGSGGNGSGS). 3 C2H2-type zinc fingers span residues 555-577 (YRCE…LRVH), 583-606 (FACR…CSVH), and 619-641 (YTCC…LSGH).

Its subcellular location is the nucleus. Transcription factor required for terminalia development. Negative regulator of the JAK/STAT pathway: represses JAK/STAT-dependent expression of ventral veins lacking (vvl) in the posterior spiracles. This Culex quinquefasciatus (Southern house mosquito) protein is Transcription factor Ken 1.